Here is a 186-residue protein sequence, read N- to C-terminus: ATP-dependent protease subunit HslV (186 aa).

Threonine 14 is an active-site residue. Na(+)-binding residues include alanine 168, cysteine 171, and threonine 174.

Belongs to the peptidase T1B family. HslV subfamily. As to quaternary structure, a double ring-shaped homohexamer of HslV is capped on each side by a ring-shaped HslU homohexamer. The assembly of the HslU/HslV complex is dependent on binding of ATP.

Its subcellular location is the cytoplasm. It catalyses the reaction ATP-dependent cleavage of peptide bonds with broad specificity.. With respect to regulation, allosterically activated by HslU binding. Protease subunit of a proteasome-like degradation complex believed to be a general protein degrading machinery. The protein is ATP-dependent protease subunit HslV of Bradyrhizobium sp. (strain ORS 278).